Reading from the N-terminus, the 246-residue chain is Sulfate transporter CysZ (246 aa).

4 helical membrane-spanning segments follow: residues 24–44 (LFVLIPLSINLLVFALLIGFA), 69–89 (IVWPLFVLLVLVIVFFTFTMV), 148–168 (LLVLSFVPGVNLVATPLWILF), and 214–234 (LLIPLVNLVMMPAAVAGATLF).

The protein belongs to the CysZ family.

It localises to the cell inner membrane. High affinity, high specificity proton-dependent sulfate transporter, which mediates sulfate uptake. Provides the sulfur source for the cysteine synthesis pathway. In Pseudomonas paraeruginosa (strain DSM 24068 / PA7) (Pseudomonas aeruginosa (strain PA7)), this protein is Sulfate transporter CysZ.